The following is a 1123-amino-acid chain: Probable serine/threonine-protein kinase nek3 (1123 aa).

The Protein kinase domain maps to Y4–I264. ATP-binding positions include I10 to A18 and K33. The active-site Proton acceptor is the D130. Composition is skewed to low complexity over residues N283–S307 and N327–K415. Disordered regions lie at residues N283–V310, N325–K415, S440–Q802, S866–M887, S908–D937, and S990–N1020. The span at S440 to I459 shows a compositional bias: polar residues. Composition is skewed to low complexity over residues S478 to V529, S557 to Q576, S588 to S617, and N642 to N653. Residues R654–P665 are compositionally biased toward polar residues. 3 stretches are compositionally biased toward low complexity: residues T666–T696, S712–T738, and S752–Q802. A compositionally biased stretch (low complexity) spans S908–I935.

Belongs to the protein kinase superfamily. NEK Ser/Thr protein kinase family. NIMA subfamily.

It catalyses the reaction L-seryl-[protein] + ATP = O-phospho-L-seryl-[protein] + ADP + H(+). It carries out the reaction L-threonyl-[protein] + ATP = O-phospho-L-threonyl-[protein] + ADP + H(+). The chain is Probable serine/threonine-protein kinase nek3 (nek3) from Dictyostelium discoideum (Social amoeba).